Reading from the N-terminus, the 274-residue chain is Large ribosomal subunit protein uL2 (274 aa).

Disordered regions lie at residues 28-55 (APHA…RHVG) and 224-274 (VAMN…RRRK).

The protein belongs to the universal ribosomal protein uL2 family. Part of the 50S ribosomal subunit. Forms a bridge to the 30S subunit in the 70S ribosome.

One of the primary rRNA binding proteins. Required for association of the 30S and 50S subunits to form the 70S ribosome, for tRNA binding and peptide bond formation. It has been suggested to have peptidyltransferase activity; this is somewhat controversial. Makes several contacts with the 16S rRNA in the 70S ribosome. This chain is Large ribosomal subunit protein uL2, found in Pseudomonas putida (strain ATCC 47054 / DSM 6125 / CFBP 8728 / NCIMB 11950 / KT2440).